We begin with the raw amino-acid sequence, 420 residues long: Glutamyl-tRNA reductase (420 aa).

Substrate-binding positions include T49 to R52, S109, E114 to Q116, and Q120. The active-site Nucleophile is the C50. G189–I194 lines the NADP(+) pocket.

It belongs to the glutamyl-tRNA reductase family. As to quaternary structure, homodimer.

The enzyme catalyses (S)-4-amino-5-oxopentanoate + tRNA(Glu) + NADP(+) = L-glutamyl-tRNA(Glu) + NADPH + H(+). It functions in the pathway porphyrin-containing compound metabolism; protoporphyrin-IX biosynthesis; 5-aminolevulinate from L-glutamyl-tRNA(Glu): step 1/2. Its function is as follows. Catalyzes the NADPH-dependent reduction of glutamyl-tRNA(Glu) to glutamate 1-semialdehyde (GSA). This is Glutamyl-tRNA reductase from Edwardsiella ictaluri (strain 93-146).